A 424-amino-acid polypeptide reads, in one-letter code: Dihydroorotase-like protein (424 aa).

It belongs to the metallo-dependent hydrolases superfamily. DHOase family. PyrC' subfamily. As to quaternary structure, heterododecamer of 6 active PyrB subunits and 6 non-catalytic PyrC' subunits.

In terms of biological role, non-functional DHOase. The sequence is that of Dihydroorotase-like protein from Pseudomonas putida (Arthrobacter siderocapsulatus).